The following is a 365-amino-acid chain: Formamidopyrimidine-DNA glycosylase (365 aa).

Pro-2 acts as the Schiff-base intermediate with DNA in catalysis. The active-site Proton donor is Glu-3. Lys-61 serves as the catalytic Proton donor; for beta-elimination activity. Residues 121–150 (RGRLAGHGDGMDGTSRTGSTLPGTGGTENS) form a disordered region. A compositionally biased stretch (polar residues) spans 134-150 (TSRTGSTLPGTGGTENS). 3 residues coordinate DNA: His-186, Arg-205, and Arg-246. An FPG-type zinc finger spans residues 331–365 (RVYGRGGQPCRHCGTTLATAQVAGRTTVFCPQCQR). Catalysis depends on Arg-355, which acts as the Proton donor; for delta-elimination activity.

The protein belongs to the FPG family. As to quaternary structure, monomer. Zn(2+) is required as a cofactor.

The catalysed reaction is Hydrolysis of DNA containing ring-opened 7-methylguanine residues, releasing 2,6-diamino-4-hydroxy-5-(N-methyl)formamidopyrimidine.. It catalyses the reaction 2'-deoxyribonucleotide-(2'-deoxyribose 5'-phosphate)-2'-deoxyribonucleotide-DNA = a 3'-end 2'-deoxyribonucleotide-(2,3-dehydro-2,3-deoxyribose 5'-phosphate)-DNA + a 5'-end 5'-phospho-2'-deoxyribonucleoside-DNA + H(+). Its function is as follows. Involved in base excision repair of DNA damaged by oxidation or by mutagenic agents. Acts as a DNA glycosylase that recognizes and removes damaged bases. Has a preference for oxidized purines, such as 7,8-dihydro-8-oxoguanine (8-oxoG). Has AP (apurinic/apyrimidinic) lyase activity and introduces nicks in the DNA strand. Cleaves the DNA backbone by beta-delta elimination to generate a single-strand break at the site of the removed base with both 3'- and 5'-phosphates. The protein is Formamidopyrimidine-DNA glycosylase of Nitratidesulfovibrio vulgaris (strain ATCC 29579 / DSM 644 / CCUG 34227 / NCIMB 8303 / VKM B-1760 / Hildenborough) (Desulfovibrio vulgaris).